The primary structure comprises 647 residues: uncharacterized protein (647 aa).

The next 5 membrane-spanning stretches (helical) occupy residues L14–W38, V61–F78, L90–I110, L140–W158, and V178–F195.

The protein localises to the cell membrane. This is an uncharacterized protein from Haemophilus influenzae (strain ATCC 51907 / DSM 11121 / KW20 / Rd).